The sequence spans 345 residues: Sesquiterpene synthase PILCRDRAFT_825684 (345 aa).

Mg(2+) is bound by residues aspartate 91, asparagine 226, serine 230, and glutamate 234. The short motif at aspartate 91–aspartate 95 is the DDXXD motif element. Positions 316 and 317 each coordinate (2E,6E)-farnesyl diphosphate.

This sequence belongs to the terpene synthase family. Mg(2+) serves as cofactor.

The catalysed reaction is (2E,6E)-farnesyl diphosphate = viridiflorene + diphosphate. Its function is as follows. Terpene cyclase that catalyzes the cyclization of farnesyl diphosphate (FPP) to various sesquiterpenes, including beta-elemene, viridiflorene and gamma-cadinene. Gamma-cadinene is the major product of PILCRDRAFT_825684. This is Sesquiterpene synthase PILCRDRAFT_825684 from Piloderma croceum (strain F 1598).